Here is a 464-residue protein sequence, read N- to C-terminus: UDP-N-acetylmuramoyl-tripeptide--D-alanyl-D-alanine ligase (464 aa).

125-131 lines the ATP pocket; the sequence is GSNGKTT.

It belongs to the MurCDEF family. MurF subfamily.

The protein resides in the cytoplasm. It carries out the reaction D-alanyl-D-alanine + UDP-N-acetyl-alpha-D-muramoyl-L-alanyl-gamma-D-glutamyl-meso-2,6-diaminopimelate + ATP = UDP-N-acetyl-alpha-D-muramoyl-L-alanyl-gamma-D-glutamyl-meso-2,6-diaminopimeloyl-D-alanyl-D-alanine + ADP + phosphate + H(+). It participates in cell wall biogenesis; peptidoglycan biosynthesis. Involved in cell wall formation. Catalyzes the final step in the synthesis of UDP-N-acetylmuramoyl-pentapeptide, the precursor of murein. The polypeptide is UDP-N-acetylmuramoyl-tripeptide--D-alanyl-D-alanine ligase (Borreliella burgdorferi (strain ATCC 35210 / DSM 4680 / CIP 102532 / B31) (Borrelia burgdorferi)).